Reading from the N-terminus, the 32-residue chain is CSNLSTCVLSAYWKDLNNYHRFSGMGFGPETP.

Cys-1 and Cys-7 form a disulfide bridge. Pro-32 is subject to Proline amide.

Belongs to the calcitonin family.

It localises to the secreted. Calcitonin is a peptide hormone that causes a rapid but short-lived drop in the level of calcium and phosphate in blood by promoting the incorporation of those ions in the bones. Calcitonin function is mediated by the calcitonin receptor/CALCR and the CALCR-RAMP2 (AMYR2) receptor complex. The chain is Calcitonin (CALCA) from Bos taurus (Bovine).